The sequence spans 665 residues: DNA ligase (665 aa).

NAD(+) is bound by residues 32 to 36 (DSEYD), 81 to 82 (SL), and E110. Catalysis depends on K112, which acts as the N6-AMP-lysine intermediate. 4 residues coordinate NAD(+): R133, E167, K283, and K307. Zn(2+)-binding residues include C401, C404, C419, and C424. Positions 586–665 (EGHPDFSGKT…AAFIEKQNGI (80 aa)) constitute a BRCT domain.

The protein belongs to the NAD-dependent DNA ligase family. LigA subfamily. Requires Mg(2+) as cofactor. The cofactor is Mn(2+).

The catalysed reaction is NAD(+) + (deoxyribonucleotide)n-3'-hydroxyl + 5'-phospho-(deoxyribonucleotide)m = (deoxyribonucleotide)n+m + AMP + beta-nicotinamide D-nucleotide.. In terms of biological role, DNA ligase that catalyzes the formation of phosphodiester linkages between 5'-phosphoryl and 3'-hydroxyl groups in double-stranded DNA using NAD as a coenzyme and as the energy source for the reaction. It is essential for DNA replication and repair of damaged DNA. The chain is DNA ligase from Staphylococcus epidermidis (strain ATCC 35984 / DSM 28319 / BCRC 17069 / CCUG 31568 / BM 3577 / RP62A).